The chain runs to 534 residues: DNA-directed RNA polymerase III subunit RPC3 (534 aa).

Residues 161–181 are disordered; that stretch reads PSVPTTENSDPGPPPPAPTLV. Phosphoserine is present on S194. The segment at 197 to 228 is disordered; sequence GKGKRRRSSDEDAAGEPKAKRPKYTTDNKEPI. A compositionally biased stretch (basic and acidic residues) spans 211 to 228; it reads GEPKAKRPKYTTDNKEPI.

The protein belongs to the eukaryotic RPC3/POLR3C RNA polymerase subunit family. In terms of assembly, component of the RNA polymerase III complex consisting of 17 subunits: a ten-subunit horseshoe-shaped catalytic core composed of POLR3A/RPC1, POLR3B/RPC2, POLR1C/RPAC1, POLR1D/RPAC2, POLR3K/RPC10, POLR2E/RPABC1, POLR2F/RPABC2, POLR2H/RPABC3, POLR2K/RPABC4 and POLR2L/RPABC5; a mobile stalk composed of two subunits POLR3H/RPC8 and CRCP/RPC9, protruding from the core and functioning primarily in transcription initiation; and additional subunits homologous to general transcription factors of the RNA polymerase II machinery, POLR3C/RPC3-POLR3F/RPC6-POLR3G/RPC7 heterotrimer required for transcription initiation and POLR3D/RPC4-POLR3E/RPC5 heterodimer involved in both transcription initiation and termination. Directly interacts with POLR3G/RPC7 and POLR3GL. Directly interacts with POLR3F/RPC6. Interacts with GTF3C4. As part of the RNA polymerase III complex, interacts with PKP2.

It localises to the nucleus. In terms of biological role, DNA-dependent RNA polymerase catalyzes the transcription of DNA into RNA using the four ribonucleoside triphosphates as substrates. Specific peripheric component of RNA polymerase III (Pol III) which synthesizes small non-coding RNAs including 5S rRNA, snRNAs, tRNAs and miRNAs from at least 500 distinct genomic loci. Part of POLR3C/RPC3-POLR3F/RPC6-POLR3G/RPC7 heterotrimer, coordinates the dynamics of Pol III stalk and clamp modules during the transition from apo to elongation state. Pol III plays a key role in sensing and limiting infection by intracellular bacteria and DNA viruses. Acts as a nuclear and cytosolic DNA sensor involved in innate immune response. Can sense non-self dsDNA that serves as template for transcription into dsRNA. The non-self RNA polymerase III transcripts, such as Epstein-Barr virus-encoded RNAs (EBERs) induce type I interferon and NF-kappa-B through the RIG-I pathway. Preferentially binds single-stranded DNA (ssDNA) in a sequence-independent manner. The polypeptide is DNA-directed RNA polymerase III subunit RPC3 (Homo sapiens (Human)).